The sequence spans 158 residues: Cyclic pyranopterin monophosphate synthase (158 aa).

Residues 75 to 77 (LCH) and 113 to 114 (ME) each bind substrate. Residue D128 is part of the active site.

The protein belongs to the MoaC family. In terms of assembly, homohexamer; trimer of dimers.

The catalysed reaction is (8S)-3',8-cyclo-7,8-dihydroguanosine 5'-triphosphate = cyclic pyranopterin phosphate + diphosphate. It functions in the pathway cofactor biosynthesis; molybdopterin biosynthesis. Functionally, catalyzes the conversion of (8S)-3',8-cyclo-7,8-dihydroguanosine 5'-triphosphate to cyclic pyranopterin monophosphate (cPMP). This is Cyclic pyranopterin monophosphate synthase from Azorhizobium caulinodans (strain ATCC 43989 / DSM 5975 / JCM 20966 / LMG 6465 / NBRC 14845 / NCIMB 13405 / ORS 571).